The chain runs to 136 residues: Snaclec rhodocytin subunit alpha (136 aa).

Disulfide bonds link Cys5–Cys16, Cys33–Cys131, and Cys106–Cys123. The C-type lectin domain occupies 12-132 (YDQHCYQAFN…CEQMHAFVCK (121 aa)).

The protein belongs to the snaclec family. As to quaternary structure, dimer (non-covalently linked) of heterodimers of subunits alpha and beta (disulfide-linked). In terms of tissue distribution, expressed by the venom gland.

It is found in the secreted. In terms of biological role, elicits platelet aggregation by the binding to the C-type lectin domain family 1 member B (CLEC1B/CLEC2). Binding leads to tyrosine phosphorylation in the cytoplasmic tail of CLEC1B, which promotes the binding of spleen tyrosine kinase (Syk), subsequent activation of PLC-gamma-2, and platelet activation and aggregation. Binding to GPIbalpha (GP1BA) and alpha-2/beta-1 (ITGA2/ITGB1) may also induce aggregation, but this is controversial. This chain is Snaclec rhodocytin subunit alpha, found in Calloselasma rhodostoma (Malayan pit viper).